The primary structure comprises 523 residues: Bifunctional purine biosynthesis protein PurH (523 aa).

In terms of domain architecture, MGS-like spans 1 to 152 (MSTDDGRRPI…KNHPSAAVVT (152 aa)).

This sequence belongs to the PurH family.

The enzyme catalyses (6R)-10-formyltetrahydrofolate + 5-amino-1-(5-phospho-beta-D-ribosyl)imidazole-4-carboxamide = 5-formamido-1-(5-phospho-D-ribosyl)imidazole-4-carboxamide + (6S)-5,6,7,8-tetrahydrofolate. The catalysed reaction is IMP + H2O = 5-formamido-1-(5-phospho-D-ribosyl)imidazole-4-carboxamide. It participates in purine metabolism; IMP biosynthesis via de novo pathway; 5-formamido-1-(5-phospho-D-ribosyl)imidazole-4-carboxamide from 5-amino-1-(5-phospho-D-ribosyl)imidazole-4-carboxamide (10-formyl THF route): step 1/1. It functions in the pathway purine metabolism; IMP biosynthesis via de novo pathway; IMP from 5-formamido-1-(5-phospho-D-ribosyl)imidazole-4-carboxamide: step 1/1. This is Bifunctional purine biosynthesis protein PurH from Mycobacterium bovis (strain BCG / Pasteur 1173P2).